The sequence spans 369 residues: Beta-1,3-galactosyltransferase 9 (369 aa).

Residues 1 to 12 (MQVTFCRLRTHQ) are Cytoplasmic-facing. A helical; Signal-anchor for type II membrane protein transmembrane segment spans residues 13 to 33 (WCFILFNVILFHALLFGTDFV). Residues 34–369 (EEYFLHSLPY…IKNNLMYFAD (336 aa)) are Lumenal-facing. N-linked (GlcNAc...) asparagine glycosylation is found at Asn66, Asn96, and Asn109.

The protein belongs to the glycosyltransferase 31 family.

Its subcellular location is the golgi apparatus membrane. Its function is as follows. Putative glycosyltransferase that could catalyze the transfer of galactose residues from UDP-alpha-D-galactose. This Homo sapiens (Human) protein is Beta-1,3-galactosyltransferase 9.